A 278-amino-acid chain; its full sequence is uncharacterized protein (278 aa).

The Cytoplasmic segment spans residues 1–34 (MAKTIKVIRKKDPKKKNLSDPLAKQKLVWKIGHV). The chain crosses the membrane as a helical span at residues 35-55 (LTLVFGLLFSITYFYHVLIFF). The Extracellular portion of the chain corresponds to 56-129 (KYRSWKWLFL…DLLSSENFHT (74 aa)). A helical transmembrane segment spans residues 130–150 (LLIACLWFFGGGKSFYKILPY). The Cytoplasmic segment spans residues 151–180 (MILSYLHLTKMNYELNANKEEKIPLTPKDR). A helical transmembrane segment spans residues 181 to 201 (KMLHLLAYSELLVILALTLDT). The Extracellular portion of the chain corresponds to 202–205 (ILFK). Residues 206-222 (TGTSGFMLVIYVGIYWL) form a helical membrane-spanning segment. Topologically, residues 223-278 (RLNFSPYAQVAVLELLVKFEKYVPKKYRDKWQVIKNFIYMKMKEHEKRTEEVARYA) are cytoplasmic.

It is found in the cell membrane. This is an uncharacterized protein from Saccharomyces cerevisiae (strain ATCC 204508 / S288c) (Baker's yeast).